Consider the following 1809-residue polypeptide: Pyochelin synthetase PchF (1809 aa).

Residues 69–490 (FPLTPVQAAY…GLLRRLAQSP (422 aa)) are condensation/cyclization. Residues 520 to 915 (FAERALLTPD…GREDDQVKIR (396 aa)) are adenylation. The Carrier domain maps to 1407–1488 (APADELENAL…GLAERLRSAP (82 aa)). Position 1442 is an O-(pantetheine 4'-phosphoryl)serine (Ser-1442). The interval 1584–1797 (LGRRYAEALH…FDCLGEALAQ (214 aa)) is thioesterase.

The protein belongs to the NRP synthetase family. It depends on pantetheine 4'-phosphate as a cofactor.

It catalyses the reaction holo-[peptidyl-carrier protein] + L-cysteine + ATP = L-cysteinyl-[peptidyl-carrier protein] + AMP + diphosphate. Its pathway is siderophore biosynthesis. Functionally, involved in the biosynthesis of the siderophore pyochelin. Adenylates L-cysteine and loads it onto its peptidyl carrier domain via a thioester linkage to the phosphopanthetheine moiety. Then forms a peptide bond between the salicyl-thiazolinyl intermediate bound to the second carrier domain of PchE and the cysteine bound to its own peptidyl carrier domain to form the salicyl-thiazolinyl-cysteinyl-S-PCP2 intermediate. It subsequently cyclizes the C-terminal cysteine to form the second thiazoline heterocycle in the salicyl-thiazolinyl-thiazolinyl-S-PCP2 intermediate. When this intermediate is released by the action of a thioesterase, it produces the tricyclic acid hydroxyphenyl-thiazolyl-thiazolinyl-carboxylic acid (HPTT-COOH), an advanced intermediate containing the aryl-4,2-bis-heterocyclic skeleton of the bithiazoline class of siderophores. The protein is Pyochelin synthetase PchF of Pseudomonas aeruginosa (strain ATCC 15692 / DSM 22644 / CIP 104116 / JCM 14847 / LMG 12228 / 1C / PRS 101 / PAO1).